A 386-amino-acid polypeptide reads, in one-letter code: 1-deoxy-D-xylulose 5-phosphate reductoisomerase (386 aa).

Positions 10, 11, 12, 13, 36, 38, and 122 each coordinate NADPH. 1-deoxy-D-xylulose 5-phosphate is bound at residue K123. E124 contributes to the NADPH binding site. Residue D148 coordinates Mn(2+). 1-deoxy-D-xylulose 5-phosphate-binding residues include S149, E150, S174, and H197. E150 is a Mn(2+) binding site. G203 is a binding site for NADPH. Positions 210, 215, 216, and 219 each coordinate 1-deoxy-D-xylulose 5-phosphate. E219 serves as a coordination point for Mn(2+).

The protein belongs to the DXR family. Requires Mg(2+) as cofactor. It depends on Mn(2+) as a cofactor.

The catalysed reaction is 2-C-methyl-D-erythritol 4-phosphate + NADP(+) = 1-deoxy-D-xylulose 5-phosphate + NADPH + H(+). It functions in the pathway isoprenoid biosynthesis; isopentenyl diphosphate biosynthesis via DXP pathway; isopentenyl diphosphate from 1-deoxy-D-xylulose 5-phosphate: step 1/6. Its function is as follows. Catalyzes the NADPH-dependent rearrangement and reduction of 1-deoxy-D-xylulose-5-phosphate (DXP) to 2-C-methyl-D-erythritol 4-phosphate (MEP). The sequence is that of 1-deoxy-D-xylulose 5-phosphate reductoisomerase from Geotalea uraniireducens (strain Rf4) (Geobacter uraniireducens).